The following is a 187-amino-acid chain: Ribosome-recycling factor (187 aa).

It belongs to the RRF family.

The protein localises to the cytoplasm. In terms of biological role, responsible for the release of ribosomes from messenger RNA at the termination of protein biosynthesis. May increase the efficiency of translation by recycling ribosomes from one round of translation to another. The protein is Ribosome-recycling factor of Rhodopseudomonas palustris (strain HaA2).